The primary structure comprises 352 residues: Holliday junction branch migration complex subunit RuvB (352 aa).

Residues 5–191 are large ATPase domain (RuvB-L); it reads TDDFSEQRVI…FGIVARLEFY (187 aa). Residues Leu-30, Arg-31, Gly-72, Lys-75, Thr-76, Thr-77, 138 to 140, Arg-181, Tyr-191, and Arg-228 each bind ATP; that span reads EDY. Residue Thr-76 coordinates Mg(2+). The tract at residues 192–262 is small ATPAse domain (RuvB-S); that stretch reads TPLELTRIVT…MADAALVMLD (71 aa). The segment at 265-352 is head domain (RuvB-H); sequence PVGFDVMDRK…GPNGELWGGQ (88 aa). DNA contacts are provided by Arg-301, Arg-320, and Arg-325.

The protein belongs to the RuvB family. As to quaternary structure, homohexamer. Forms an RuvA(8)-RuvB(12)-Holliday junction (HJ) complex. HJ DNA is sandwiched between 2 RuvA tetramers; dsDNA enters through RuvA and exits via RuvB. An RuvB hexamer assembles on each DNA strand where it exits the tetramer. Each RuvB hexamer is contacted by two RuvA subunits (via domain III) on 2 adjacent RuvB subunits; this complex drives branch migration. In the full resolvosome a probable DNA-RuvA(4)-RuvB(12)-RuvC(2) complex forms which resolves the HJ.

Its subcellular location is the cytoplasm. The enzyme catalyses ATP + H2O = ADP + phosphate + H(+). Functionally, the RuvA-RuvB-RuvC complex processes Holliday junction (HJ) DNA during genetic recombination and DNA repair, while the RuvA-RuvB complex plays an important role in the rescue of blocked DNA replication forks via replication fork reversal (RFR). RuvA specifically binds to HJ cruciform DNA, conferring on it an open structure. The RuvB hexamer acts as an ATP-dependent pump, pulling dsDNA into and through the RuvAB complex. RuvB forms 2 homohexamers on either side of HJ DNA bound by 1 or 2 RuvA tetramers; 4 subunits per hexamer contact DNA at a time. Coordinated motions by a converter formed by DNA-disengaged RuvB subunits stimulates ATP hydrolysis and nucleotide exchange. Immobilization of the converter enables RuvB to convert the ATP-contained energy into a lever motion, pulling 2 nucleotides of DNA out of the RuvA tetramer per ATP hydrolyzed, thus driving DNA branch migration. The RuvB motors rotate together with the DNA substrate, which together with the progressing nucleotide cycle form the mechanistic basis for DNA recombination by continuous HJ branch migration. Branch migration allows RuvC to scan DNA until it finds its consensus sequence, where it cleaves and resolves cruciform DNA. The polypeptide is Holliday junction branch migration complex subunit RuvB (Herminiimonas arsenicoxydans).